Reading from the N-terminus, the 283-residue chain is Polyamine aminopropyltransferase (283 aa).

In terms of domain architecture, PABS spans 5–241; that stretch reads NNWYIEHFER…GWWSVTLARK (237 aa). Residue Gln35 participates in S-methyl-5'-thioadenosine binding. Spermidine-binding residues include His66 and Asp90. Residues Asp110 and 141–142 each bind S-methyl-5'-thioadenosine; that span reads DG. The active-site Proton acceptor is the Asp160. Position 160–163 (160–163) interacts with spermidine; that stretch reads DSTD. Pro167 contributes to the S-methyl-5'-thioadenosine binding site.

It belongs to the spermidine/spermine synthase family. As to quaternary structure, homodimer or homotetramer.

The protein resides in the cytoplasm. The enzyme catalyses S-adenosyl 3-(methylsulfanyl)propylamine + putrescine = S-methyl-5'-thioadenosine + spermidine + H(+). It participates in amine and polyamine biosynthesis; spermidine biosynthesis; spermidine from putrescine: step 1/1. Functionally, catalyzes the irreversible transfer of a propylamine group from the amino donor S-adenosylmethioninamine (decarboxy-AdoMet) to putrescine (1,4-diaminobutane) to yield spermidine. The polypeptide is Polyamine aminopropyltransferase (Stenotrophomonas maltophilia (strain R551-3)).